The chain runs to 674 residues: L-type lectin-domain containing receptor kinase SIT1 (674 aa).

Positions 1 to 27 (MRRPELIMRSLPLILFLSLGSFHLAAA) are cleaved as a signal peptide. Topologically, residues 28 to 301 (AVDDQFTFDG…IARAPSNVLK (274 aa)) are extracellular. The interval 31 to 275 (DQFTFDGFAG…VLAWSFKMDG (245 aa)) is legume-lectin like. 7 N-linked (GlcNAc...) asparagine glycosylation sites follow: Asn42, Asn61, Asn143, Asn196, Asn219, Asn240, and Asn281. The chain crosses the membrane as a helical span at residues 302–322 (ILLPIASAALVSALAIAVLVI). Residues 323 to 674 (HRRRRRYAEL…GNISDIPRAR (352 aa)) are Cytoplasmic-facing. Residues 357–636 (FSDERLLGFG…LDGAMPLPEL (280 aa)) form the Protein kinase domain. Residues 363–371 (LGFGGFGRV) and Lys386 contribute to the ATP site. The Proton acceptor role is filled by Asp482. Phosphothreonine is present on residues Thr511, Thr515, Thr516, and Thr521.

The protein in the C-terminal section; belongs to the protein kinase superfamily. Ser/Thr protein kinase family. It in the N-terminal section; belongs to the leguminous lectin family. Interacts with B'KAPPA. In terms of processing, autophosphorylated at Thr-511, Thr-515 or Thr-516, and Thr-521 in response to salt stress. Dephosphorylated by phosphatase 2A in response to salt stress. As to expression, expressed in root epidermal cells.

The protein localises to the cell membrane. It catalyses the reaction L-seryl-[protein] + ATP = O-phospho-L-seryl-[protein] + ADP + H(+). It carries out the reaction L-threonyl-[protein] + ATP = O-phospho-L-threonyl-[protein] + ADP + H(+). Activated by autophosphorylation in response to salt stress. Lectin-domain containing receptor kinase involved in salt stress response. Acts as a negative regulator of salt tolerance. Mediates salt sensitivity by phosphorylating and activating MPK3 and MPK6. Promotes ethylene production and mediates salt-induced ethylene signaling. Promotes the accumulation of reactive oxygen species (ROS) under salt stress conditions. Its kinase activity is triggered by salt stress and is required for its function in salt stress response. Phosphorylates B'KAPPA, a B regulatory subunit of phosphatase 2A (PP2A). This is L-type lectin-domain containing receptor kinase SIT1 from Oryza sativa subsp. japonica (Rice).